The chain runs to 670 residues: UvrABC system protein B (670 aa).

The Helicase ATP-binding domain occupies 51–433 (DGLKKGEPFQ…SSRVVEQIIR (383 aa)). 64–71 (GVTGSGKT) is an ATP binding site. The Beta-hairpin signature appears at 117–140 (YYDYYQPESYLPAKDQYIEKDAMI). A Helicase C-terminal domain is found at 453 to 612 (DVMQEIRKIV…IVPTTIRKPI (160 aa)). One can recognise a UVR domain in the interval 631–666 (PNVIIELDAEMREAADRLDFERAIQVRELIKKLEKE).

It belongs to the UvrB family. In terms of assembly, forms a heterotetramer with UvrA during the search for lesions. Interacts with UvrC in an incision complex.

The protein localises to the cytoplasm. In terms of biological role, the UvrABC repair system catalyzes the recognition and processing of DNA lesions. A damage recognition complex composed of 2 UvrA and 2 UvrB subunits scans DNA for abnormalities. Upon binding of the UvrA(2)B(2) complex to a putative damaged site, the DNA wraps around one UvrB monomer. DNA wrap is dependent on ATP binding by UvrB and probably causes local melting of the DNA helix, facilitating insertion of UvrB beta-hairpin between the DNA strands. Then UvrB probes one DNA strand for the presence of a lesion. If a lesion is found the UvrA subunits dissociate and the UvrB-DNA preincision complex is formed. This complex is subsequently bound by UvrC and the second UvrB is released. If no lesion is found, the DNA wraps around the other UvrB subunit that will check the other stand for damage. The chain is UvrABC system protein B from Methanosarcina mazei (strain ATCC BAA-159 / DSM 3647 / Goe1 / Go1 / JCM 11833 / OCM 88) (Methanosarcina frisia).